The sequence spans 114 residues: Probable acid stress chaperone HdeA (114 aa).

Positions 1-26 (MIKALFNKNTALAAVTILALSGGAMA) are cleaved as a signal peptide. Cys-46 and Cys-94 are joined by a disulfide.

Belongs to the HdeA family.

Its subcellular location is the periplasm. In terms of biological role, required for optimal acid stress protection. Exhibits a chaperone-like activity only at low pH by suppressing non-specifically the aggregation of denaturated periplasmic proteins. This chain is Probable acid stress chaperone HdeA, found in Brucella suis biovar 1 (strain 1330).